The chain runs to 295 residues: Tyrosine recombinase XerC (295 aa).

Residues 1-85 (MLTALNRYWD…ALRRFLSFLV (85 aa)) form the Core-binding (CB) domain. Positions 106-285 (HLPKNMDGEQ…NFQHLAEVYD (180 aa)) constitute a Tyr recombinase domain. Active-site residues include R145, K169, H237, R240, and H263. The active-site O-(3'-phospho-DNA)-tyrosine intermediate is the Y272.

This sequence belongs to the 'phage' integrase family. XerC subfamily. As to quaternary structure, forms a cyclic heterotetrameric complex composed of two molecules of XerC and two molecules of XerD.

The protein resides in the cytoplasm. In terms of biological role, site-specific tyrosine recombinase, which acts by catalyzing the cutting and rejoining of the recombining DNA molecules. The XerC-XerD complex is essential to convert dimers of the bacterial chromosome into monomers to permit their segregation at cell division. It also contributes to the segregational stability of plasmids. The protein is Tyrosine recombinase XerC of Haemophilus influenzae (strain PittEE).